The sequence spans 257 residues: Ribonuclease PH (257 aa).

Residues Arg-86 and 124 to 126 (GTR) contribute to the phosphate site.

The protein belongs to the RNase PH family. In terms of assembly, homohexameric ring arranged as a trimer of dimers.

It catalyses the reaction tRNA(n+1) + phosphate = tRNA(n) + a ribonucleoside 5'-diphosphate. Its function is as follows. Phosphorolytic 3'-5' exoribonuclease that plays an important role in tRNA 3'-end maturation. Removes nucleotide residues following the 3'-CCA terminus of tRNAs; can also add nucleotides to the ends of RNA molecules by using nucleoside diphosphates as substrates, but this may not be physiologically important. Probably plays a role in initiation of 16S rRNA degradation (leading to ribosome degradation) during starvation. In Sulfurihydrogenibium sp. (strain YO3AOP1), this protein is Ribonuclease PH.